Consider the following 485-residue polypeptide: E3 ubiquitin-protein ligase TRIM68 (485 aa).

The RING-type zinc-finger motif lies at 16 to 61; that stretch reads CPICMTFLREPMSIDCGHSFCHSCLSGLWEIPGESQNWGYTCPLCR. The B box-type zinc-finger motif lies at 93-134; it reads LKGDLCERHGEKLKMFCKEDVLIMCEACSQSPEHEAHSVVPM. Zn(2+) contacts are provided by Cys-98, His-101, Cys-120, and His-126. A coiled-coil region spans residues 207–239; it reads AEVAAALASLQREAAETMQKLELNHSELIQQSQ. Residues 285–481 form the B30.2/SPRY domain; sequence LKTDCRVLGL…NTAPLAICSL (197 aa).

Belongs to the TRIM/RBCC family. As to quaternary structure, interacts with AR/androgen receptor (via ligand-binding domain). Interacts with KAT5/TIP60. Auto-ubiquitinated. Widely expressed. Expressed at high levels in prostate cancer cell lines. Up-regulation could be restricted to androgen-dependent cells.

The protein resides in the cytoplasm. Its subcellular location is the perinuclear region. It is found in the nucleus. The enzyme catalyses S-ubiquitinyl-[E2 ubiquitin-conjugating enzyme]-L-cysteine + [acceptor protein]-L-lysine = [E2 ubiquitin-conjugating enzyme]-L-cysteine + N(6)-ubiquitinyl-[acceptor protein]-L-lysine.. Its pathway is protein modification; protein ubiquitination. Functions as a ubiquitin E3 ligase. Acts as a coactivator of androgen receptor (AR) depending on its ubiquitin ligase activity. This Homo sapiens (Human) protein is E3 ubiquitin-protein ligase TRIM68 (TRIM68).